A 341-amino-acid chain; its full sequence is Glyceraldehyde-3-phosphate dehydrogenase 2 (341 aa).

NAD(+)-binding positions include 12–13 (RI), Arg78, and Thr120. D-glyceraldehyde 3-phosphate contacts are provided by residues 152–154 (SCT) and Thr183. The active-site Nucleophile is the Cys153. Asn184 serves as a coordination point for NAD(+). Residues Arg198, 211-212 (TG), and Arg234 each bind D-glyceraldehyde 3-phosphate. Asn313 lines the NAD(+) pocket.

The protein belongs to the glyceraldehyde-3-phosphate dehydrogenase family. Homotetramer.

It is found in the cytoplasm. The catalysed reaction is D-glyceraldehyde 3-phosphate + phosphate + NAD(+) = (2R)-3-phospho-glyceroyl phosphate + NADH + H(+). It participates in carbohydrate degradation; glycolysis; pyruvate from D-glyceraldehyde 3-phosphate: step 1/5. Functionally, catalyzes the oxidative phosphorylation of glyceraldehyde 3-phosphate (G3P) to 1,3-bisphosphoglycerate (BPG) using the cofactor NAD. The first reaction step involves the formation of a hemiacetal intermediate between G3P and a cysteine residue, and this hemiacetal intermediate is then oxidized to a thioester, with concomitant reduction of NAD to NADH. The reduced NADH is then exchanged with the second NAD, and the thioester is attacked by a nucleophilic inorganic phosphate to produce BPG. This Staphylococcus epidermidis (strain ATCC 35984 / DSM 28319 / BCRC 17069 / CCUG 31568 / BM 3577 / RP62A) protein is Glyceraldehyde-3-phosphate dehydrogenase 2 (gapA2).